A 1295-amino-acid polypeptide reads, in one-letter code: Phosphoribosylformylglycinamidine synthase (1295 aa).

Positions 305-327 are disordered; the sequence is WPGAATGSGGEIRDEGATGRGAK. Residues 307 to 318 and Ala-678 each bind ATP; that span reads GAATGSGGEIRD. 3 residues coordinate Mg(2+): Glu-718, Asn-722, and Asp-884. Residue Ser-886 participates in ATP binding. The 254-residue stretch at 1042–1295 folds into the Glutamine amidotransferase type-1 domain; it reads VAVLREQGVN…IFRNARKQLG (254 aa). Cys-1135 serves as the catalytic Nucleophile. Residues His-1260 and Glu-1262 contribute to the active site.

In the N-terminal section; belongs to the FGAMS family. As to quaternary structure, monomer.

Its subcellular location is the cytoplasm. The enzyme catalyses N(2)-formyl-N(1)-(5-phospho-beta-D-ribosyl)glycinamide + L-glutamine + ATP + H2O = 2-formamido-N(1)-(5-O-phospho-beta-D-ribosyl)acetamidine + L-glutamate + ADP + phosphate + H(+). The protein operates within purine metabolism; IMP biosynthesis via de novo pathway; 5-amino-1-(5-phospho-D-ribosyl)imidazole from N(2)-formyl-N(1)-(5-phospho-D-ribosyl)glycinamide: step 1/2. Phosphoribosylformylglycinamidine synthase involved in the purines biosynthetic pathway. Catalyzes the ATP-dependent conversion of formylglycinamide ribonucleotide (FGAR) and glutamine to yield formylglycinamidine ribonucleotide (FGAM) and glutamate. The protein is Phosphoribosylformylglycinamidine synthase of Shigella sonnei (strain Ss046).